The chain runs to 37 residues: Disintegrin morulustatin (37 aa).

Intrachain disulfides connect C12–C16, C22–C36, and C24–C31.

It belongs to the venom metalloproteinase (M12B) family. P-II subfamily. P-IIa sub-subfamily. Expressed by the venom gland.

The protein resides in the secreted. Functionally, inhibits ADP-induced platelet aggregation in human whole blood in a concentration-dependent manner (IC(50)=89.5 nM). The chain is Disintegrin morulustatin from Crotalus morulus (Tamaulipan rock rattlesnake).